The sequence spans 531 residues: Zinc finger protein 703-B (531 aa).

Polar residues predominate over residues 1-10 (MNCSPPGSCT). 3 disordered regions span residues 1-28 (MNCS…ATLA), 88-249 (SQIG…VAPI), and 295-318 (VGNQ…LTGA). Low complexity-rich tracts occupy residues 19–28 (TPATPCATLA) and 113–122 (RSSSLKLGES). Residues 171–180 (SPSSRVSSPG) are compositionally biased toward polar residues. Basic and acidic residues predominate over residues 183 to 198 (CESKNNESQEKKEPEV). A compositionally biased stretch (polar residues) spans 199–215 (NKSSLETSQANPTLTRA). A compositionally biased stretch (low complexity) spans 216–227 (SISNSSAESSQS). A C2H2-type zinc finger spans residues 404–432 (HICNWVSASGPCDKRFATSEELLAHLRTH).

This sequence belongs to the Elbow/Noc family.

The protein resides in the nucleus. The protein localises to the cytoplasm. Functionally, transcriptional corepressor which does not bind directly to DNA and may regulate transcription through recruitment of histone deacetylases to gene promoters. Regulates cell adhesion, migration and proliferation. Involved in specification of the lateral neural plate border (NPB). May be required for segmental gene expression during hindbrain development. The sequence is that of Zinc finger protein 703-B (znf703-b) from Xenopus laevis (African clawed frog).